Consider the following 503-residue polypeptide: Probable cytosol aminopeptidase (503 aa).

Residues lysine 274 and aspartate 279 each coordinate Mn(2+). The active site involves lysine 286. Residues aspartate 297, aspartate 356, and glutamate 358 each contribute to the Mn(2+) site. Arginine 360 is a catalytic residue.

This sequence belongs to the peptidase M17 family. It depends on Mn(2+) as a cofactor.

The protein localises to the cytoplasm. It carries out the reaction Release of an N-terminal amino acid, Xaa-|-Yaa-, in which Xaa is preferably Leu, but may be other amino acids including Pro although not Arg or Lys, and Yaa may be Pro. Amino acid amides and methyl esters are also readily hydrolyzed, but rates on arylamides are exceedingly low.. The enzyme catalyses Release of an N-terminal amino acid, preferentially leucine, but not glutamic or aspartic acids.. Functionally, presumably involved in the processing and regular turnover of intracellular proteins. Catalyzes the removal of unsubstituted N-terminal amino acids from various peptides. The polypeptide is Probable cytosol aminopeptidase (Burkholderia orbicola (strain MC0-3)).